Here is a 43-residue protein sequence, read N- to C-terminus: Protein PsbN (43 aa).

The helical transmembrane segment at 5-27 threads the bilayer; that stretch reads TLVXISISGSLVSFTGYALYTAF.

This sequence belongs to the PsbN family.

The protein localises to the plastid. It is found in the chloroplast thylakoid membrane. Its function is as follows. May play a role in photosystem I and II biogenesis. In Calycanthus floridus (Eastern sweetshrub), this protein is Protein PsbN.